We begin with the raw amino-acid sequence, 484 residues long: Arachin Ahy-3 (484 aa).

An N-terminal signal peptide occupies residues 1 to 20 (MAKLLALSVCFCFLVLGASS). Disulfide bonds link C32–C65 and C108–C305. Residues 35–253 (QRLNAQRPDN…GFQVNEDIVR (219 aa)) form the Cupin type-1 1 domain. Residues 208–233 (QQRSGRQSPKGEEQEQEQENEGGNVF) form a disordered region. Residues 295–298 (DFNN) constitute a propeptide that is removed on maturation. The Cupin type-1 2 domain occupies 311–460 (MNIGKSTSAD…SYGLQYEQAR (150 aa)). A propeptide spanning residues 479–484 (MIRTVA) is cleaved from the precursor.

The protein belongs to the 11S seed storage protein (globulins) family. Hexamer; each subunit is composed of an acidic and a basic chain derived from a single precursor and linked by a disulfide bond.

The chain is Arachin Ahy-3 from Arachis hypogaea (Peanut).